Reading from the N-terminus, the 403-residue chain is Dual-specificity RNA methyltransferase RlmN (403 aa).

The active-site Proton acceptor is E126. The Radical SAM core domain occupies 132–375; that stretch reads ETDRGTLCVS…VRTPRGRDIL (244 aa). A disulfide bridge links C139 with C378. Residues C146, C150, and C153 each contribute to the [4Fe-4S] cluster site. S-adenosyl-L-methionine-binding positions include 204–205, S236, 258–260, and N335; these read GE and SLH. C378 (S-methylcysteine intermediate) is an active-site residue.

The protein belongs to the radical SAM superfamily. RlmN family. It depends on [4Fe-4S] cluster as a cofactor.

It is found in the cytoplasm. It catalyses the reaction adenosine(2503) in 23S rRNA + 2 reduced [2Fe-2S]-[ferredoxin] + 2 S-adenosyl-L-methionine = 2-methyladenosine(2503) in 23S rRNA + 5'-deoxyadenosine + L-methionine + 2 oxidized [2Fe-2S]-[ferredoxin] + S-adenosyl-L-homocysteine. The enzyme catalyses adenosine(37) in tRNA + 2 reduced [2Fe-2S]-[ferredoxin] + 2 S-adenosyl-L-methionine = 2-methyladenosine(37) in tRNA + 5'-deoxyadenosine + L-methionine + 2 oxidized [2Fe-2S]-[ferredoxin] + S-adenosyl-L-homocysteine. Specifically methylates position 2 of adenine 2503 in 23S rRNA and position 2 of adenine 37 in tRNAs. m2A2503 modification seems to play a crucial role in the proofreading step occurring at the peptidyl transferase center and thus would serve to optimize ribosomal fidelity. The chain is Dual-specificity RNA methyltransferase RlmN from Bradyrhizobium sp. (strain BTAi1 / ATCC BAA-1182).